The following is a 164-amino-acid chain: Envelope glycoprotein L (164 aa).

Residues 1–24 form the signal peptide; that stretch reads MRSLDRYAIFILLACGLLWRPCLS.

Belongs to the herpesviridae glycoprotein L family. Interacts with glycoprotein H (gH); this interaction is necessary for the correct processing and cell surface expression of gH. The heterodimer gH/gL seems to interact with gB trimers during fusion.

It localises to the virion membrane. Its subcellular location is the host cell membrane. The protein resides in the host Golgi apparatus. The protein localises to the host trans-Golgi network. In terms of biological role, the heterodimer glycoprotein H-glycoprotein L is required for the fusion of viral and plasma membranes leading to virus entry into the host cell. Acts as a functional inhibitor of gH and maintains gH in an inhibited form. Upon binding to host integrins, gL dissociates from gH leading to activation of the viral fusion glycoproteins gB and gH. This chain is Envelope glycoprotein L, found in Equine herpesvirus 2 (strain 86/87) (EHV-2).